Here is a 391-residue protein sequence, read N- to C-terminus: MKIFLCIIAVVSLQGVVAFHVEREYAWKNITYEGIDPASYNIENSIPTAFAHDAASKKIFITVPRRNQIPFTLTELDTTKHPERSPPLSKFPGSDKLISVYQPVIDECRRLWIADVGQVEYKGDEQKYPKQKAAIIAYDLTKDNYPEIDRYEIPNNVAGNSLGFGGFAVDVTNPKEGCGNTFVYITNFEDNTLIVYDQEKKDSWKISHGSFKPEHDSTLSHNGEQYKYRVGIFGIALGDRDPEGNRPAYYIAGSSTKLFEISTKILKQKGAKFDPVNLGNRGPHSEAIALAYDPKTKVIFFAEADSRQISCWNIQKPLNHKNTDVIYASSKFIFGTDISVDSESQLWFLSNGQPPIDNLKLTFDKPHIRLMRVDTAKAIRRTKCEVKRVKP.

The first 18 residues, 1-18 (MKIFLCIIAVVSLQGVVA), serve as a signal peptide directing secretion. N29 is a glycosylation site (N-linked (GlcNAc...) asparagine).

Belongs to the major royal jelly protein family. As to expression, female salivary gland (at protein level).

It is found in the secreted. Probably modulates blood feeding of sand flies on vertebrate species by binding and sequestering different mediators involved in the host response. Binds biogenic amines. Binds serotonin and dopamine with high affinity. Binds adrenaline, octopamine and adrenaline with medium affinity. Binds histamine with low affinity. The polypeptide is Yellow-related salivary protein ASP4 (Phlebotomus orientalis (Phlebotomine sand fly)).